The primary structure comprises 346 residues: Putative toluene-4-sulfonate monooxygenase system iron-sulfur subunit TsaM2 (346 aa).

A Rieske domain is found at 7-108; that stretch reads WYVAGMATDC…LVERHGLLWI (102 aa). [2Fe-2S] cluster contacts are provided by C47, H49, C66, and H69.

As to quaternary structure, homotetramer. Part of the p-toluenesulfonate methyl-monooxygenase complex TsaBM, comprising the reductase TsaB and the oxygenase TsaM. It depends on [2Fe-2S] cluster as a cofactor.

The catalysed reaction is toluene-4-sulfonate + NADH + O2 + H(+) = 4-(hydroxymethyl)benzenesulfonate + NAD(+) + H2O. Its function is as follows. Involved in the toluene-4-sulfonate degradation pathway. Does not discriminate between the sulfonate and the carboxyl substituents and can also be involved in the p-toluenecarboxylate degradation pathway. The sequence is that of Putative toluene-4-sulfonate monooxygenase system iron-sulfur subunit TsaM2 (tsaM2) from Comamonas testosteroni (Pseudomonas testosteroni).